Reading from the N-terminus, the 392-residue chain is 5-azacytidine-induced protein 2 (392 aa).

The tract at residues 1–197 (MDALVEDDIC…IELQKAKQTD (197 aa)) is homodimerization. 3 coiled-coil regions span residues 40 to 76 (ALVTAYEDIKKRLKDSEKENSLLKKRIRFLEEKLIAR), 102 to 135 (DRDNLKSKLDKMNKDNSESLKVLNEQLQSKEVEL), and 166 to 196 (DLKIHGLEQELELMRKECSDLKIELQKAKQT). Residues 216-257 (SDNMQHAYWELKREMSNLHLVTQVQAELLRKLKTSTAIKKAC) are interaction with TBK1 and IKBKE. Residues Ser-318 and Ser-353 each carry the phosphoserine modification. The tract at residues 345–365 (EDNSWVFPSPPKSSETAFGET) is disordered.

In terms of assembly, homodimer. Interacts with IKBKE, TBK1 and TICAM1. Interacts with TAX1BP1. Interacts with CALCOCO2. In terms of processing, ubiquitinated via 'Lys-48'-linked polyubiquitination by TRIM38, leading to its degradation.

Its subcellular location is the cytoplasm. Adapter protein which binds TBK1 and IKBKE playing a role in antiviral innate immunity. Activates serine/threonine-protein kinase TBK1 and facilitates its oligomerization. Enhances the phosphorylation of NF-kappa-B p65 subunit RELA by TBK1. Promotes TBK1-induced as well as TNF-alpha or PMA-induced activation of NF-kappa-B. Participates in IFNB promoter activation via TICAM1. The polypeptide is 5-azacytidine-induced protein 2 (AZI2) (Pongo abelii (Sumatran orangutan)).